The following is a 54-amino-acid chain: Anti-adapter protein SpxO (54 aa).

In terms of assembly, interacts with SpxH.

Inhibitor of Spx proteolytic control. Acts by interacting with SpxH/YjbH, which disrupts interaction between SpxH and Spx, and inhibits SpxH-enhanced proteolysis of Spx by ClpXP. Required for the stabilization of Spx and activation of Spx-regulated genes in response to cell wall stress. The polypeptide is Anti-adapter protein SpxO (Bacillus subtilis (strain 168)).